The sequence spans 213 residues: Cell division protein SepF 2 (213 aa).

The interval 16–63 (EDDGYDGRGFDPDDDFEPELDPEPERDRRRHEPPHQSHQALHPQRDES) is disordered. Acidic residues predominate over residues 27-39 (PDDDFEPELDPEP).

This sequence belongs to the SepF family. In terms of assembly, homodimer. Interacts with FtsZ.

The protein localises to the cytoplasm. In terms of biological role, cell division protein that is part of the divisome complex and is recruited early to the Z-ring. Probably stimulates Z-ring formation, perhaps through the cross-linking of FtsZ protofilaments. Its function overlaps with FtsA. The chain is Cell division protein SepF 2 from Streptomyces avermitilis (strain ATCC 31267 / DSM 46492 / JCM 5070 / NBRC 14893 / NCIMB 12804 / NRRL 8165 / MA-4680).